Reading from the N-terminus, the 1373-residue chain is Disease resistance protein RRS1 (1373 aa).

The region spanning 5-146 (EKDEEFVCIS…EIVRDVYETH (142 aa)) is the TIR domain. An NB-ARC domain is found at 170–421 (IGIRCVGIWG…LLEGCGFFPH (252 aa)). ATP is bound at residue 179 to 186 (GMPGIGKT). LRR repeat units follow at residues 498-522 (SEEI…AFKN), 535-553 (NPEV…HSLP), 554-575 (NELR…NFDP), 577-598 (HLVE…TKNL), 621-646 (AENL…RLLR), 665-688 (PPNI…TVKP), 742-766 (LPNM…SIQG), 768-793 (PRFL…SLEI), and 831-854 (PRNL…PLSL). Residues 988-1005 (RNFHCWAPGKVVPKVRKD) carry the Nuclear localization signal motif. The segment at residues 1204 to 1272 (IPAIDEGDLW…YLSEHNHPRP (69 aa)) is a DNA-binding region (WRKY). Residues 1300-1323 (RVFQNKDEPNKPHLPSSSTPPGNA) form a disordered region.

In terms of assembly, interacts with PopP2, a R.solanacearum type III effector.

Its subcellular location is the nucleus. Its function is as follows. Transcription factor. Interacts specifically with the W box (5'-(T)TGAC[CT]-3'), a frequently occurring elicitor-responsive cis-acting element. Also acts as a disease resistance protein involved in resistance to fungal and bacterial pathogens, including R.solanacearum, P.syringae pv. tomato and C.higginsianum. In presence of RPS4, elicites an EDS1-dependent hypersensitive response. The polypeptide is Disease resistance protein RRS1 (Arabidopsis thaliana (Mouse-ear cress)).